The primary structure comprises 107 residues: Large ribosomal subunit protein uL24 (107 aa).

The protein belongs to the universal ribosomal protein uL24 family. In terms of assembly, part of the 50S ribosomal subunit.

One of two assembly initiator proteins, it binds directly to the 5'-end of the 23S rRNA, where it nucleates assembly of the 50S subunit. Its function is as follows. One of the proteins that surrounds the polypeptide exit tunnel on the outside of the subunit. This chain is Large ribosomal subunit protein uL24, found in Neisseria gonorrhoeae (strain ATCC 700825 / FA 1090).